We begin with the raw amino-acid sequence, 338 residues long: uncharacterized protein (338 aa).

3 helical membrane passes run 11–31 (ILSL…TFAI), 249–269 (IAVF…IIPA), and 318–338 (VPTP…GLGL).

It localises to the cell membrane. This is an uncharacterized protein from Methanocaldococcus jannaschii (strain ATCC 43067 / DSM 2661 / JAL-1 / JCM 10045 / NBRC 100440) (Methanococcus jannaschii).